We begin with the raw amino-acid sequence, 743 residues long: Envelope glycoprotein H (743 aa).

The first 23 residues, methionine 1–glutamine 23, serve as a signal peptide directing secretion. Over arginine 24–leucine 720 the chain is Virion surface. Asparagine 56, asparagine 63, asparagine 68, and asparagine 193 each carry an N-linked (GlcNAc...) asparagine; by host glycan. Residues tyrosine 218–leucine 281 are interaction with gL. Asparagine 642 and asparagine 701 each carry an N-linked (GlcNAc...) asparagine; by host glycan. Residues methionine 721–lysine 741 form a helical membrane-spanning segment. Over threonine 742–cysteine 743 the chain is Intravirion.

The protein belongs to the herpesviridae glycoprotein H family. As to quaternary structure, interacts with glycoprotein L (gL); this interaction is necessary for the correct processing and cell surface expression of gH. The heterodimer gH/gL seems to interact with gB trimers during fusion. Forms the envelope pentamer complex (PC) composed of gH, gL, UL128, UL130, and UL131A. The pentamer interacts with host NRP2. Forms the envelope trimer complex composed of gH, gL, and gO. The trimer interacts with host PDGFRA. The trimer also interacts with host EPHA2. Interacts with UL116. Post-translationally, N-glycosylated, O-glycosylated, and sialylated.

It is found in the virion membrane. The protein resides in the host cell membrane. Its subcellular location is the host endosome membrane. Its function is as follows. The heterodimer glycoprotein H-glycoprotein L is required for the fusion of viral and plasma membranes leading to virus entry into the host cell. Following initial binding to host receptor, membrane fusion is mediated by the fusion machinery composed of gB and the heterodimer gH/gL. May also be involved in the fusion between the virion envelope and the outer nuclear membrane during virion morphogenesis. In human cytomegalovirus, forms two distincts complexes to mediate viral entry, a trimer and a pentamer at the surface of the virion envelope. The gH-gL-gO trimer is required for infection in fibroblasts by interacting with host PDGFRA, and in glioblastoma cells by interacting with host EPHA2. The gH-gL-UL128-UL130-UL131A pentamer is essential for viral entry in epithelial, endothelial and myeloid cells via interaction with host NRP2. The polypeptide is Envelope glycoprotein H (Human cytomegalovirus (strain AD169) (HHV-5)).